We begin with the raw amino-acid sequence, 148 residues long: Ubiquitin-like protein 4A (148 aa).

The Ubiquitin-like domain maps to 1-76 (MQLTVKALKG…LNLMVKEQVA (76 aa)).

Component of the bag6/bat3 complex.

It localises to the cytoplasm. The protein resides in the cytosol. The protein localises to the nucleus. In terms of biological role, as part of a cytosolic protein quality control complex, the bag6/bat3 complex, maintains misfolded and hydrophobic patches-containing proteins in a soluble state and participates in their proper delivery to the endoplasmic reticulum or alternatively can promote their sorting to the proteasome where they undergo degradation. The bag6/bat3 complex is involved in the post-translational delivery of tail-anchored/type II transmembrane proteins to the endoplasmic reticulum membrane. Similarly, the bag6/bat3 complex also functions as a sorting platform for proteins of the secretory pathway that are mislocalized to the cytosol either delivering them to the proteasome for degradation or to the endoplasmic reticulum. The bag6/bat3 complex also plays a role in the endoplasmic reticulum-associated degradation (ERAD), a quality control mechanism that eliminates unwanted proteins of the endoplasmic reticulum through their retrotranslocation to the cytosol and their targeting to the proteasome. It maintains these retrotranslocated proteins in an unfolded yet soluble state condition in the cytosol to ensure their proper delivery to the proteasome. This chain is Ubiquitin-like protein 4A (ubl4a), found in Xenopus tropicalis (Western clawed frog).